The chain runs to 122 residues: Large ribosomal subunit protein bL12 (122 aa).

Belongs to the bacterial ribosomal protein bL12 family. As to quaternary structure, homodimer. Part of the ribosomal stalk of the 50S ribosomal subunit. Forms a multimeric L10(L12)X complex, where L10 forms an elongated spine to which 2 to 4 L12 dimers bind in a sequential fashion. Binds GTP-bound translation factors.

Functionally, forms part of the ribosomal stalk which helps the ribosome interact with GTP-bound translation factors. Is thus essential for accurate translation. This Buchnera aphidicola subsp. Baizongia pistaciae (strain Bp) protein is Large ribosomal subunit protein bL12.